Consider the following 181-residue polypeptide: Ferredoxin C 2, chloroplastic (181 aa).

Residues 1–44 (MALILPCTFCTSLQKKNFPINRRYITNFRRGATTATCEFRIPVE) constitute a chloroplast transit peptide. The 2Fe-2S ferredoxin-type domain maps to 59 to 151 (HKVTVHDRQR…DLEVETQDED (93 aa)). The [2Fe-2S] cluster site is built by Cys97, Cys102, Cys105, and Cys135.

The protein belongs to the 2Fe2S plant-type ferredoxin family. [2Fe-2S] cluster serves as cofactor.

It localises to the plastid. Its subcellular location is the chloroplast. In terms of biological role, ferredoxins are iron-sulfur proteins that transfer electrons in a wide variety of metabolic reactions. Mediates alternative electron partitioning in conditions of acceptor limitation at photosystem I. This is Ferredoxin C 2, chloroplastic from Arabidopsis thaliana (Mouse-ear cress).